Reading from the N-terminus, the 427-residue chain is Trigger factor (427 aa).

Residues 163–248 enclose the PPIase FKBP-type domain; that stretch reads GDTVVIDFVG…IHEVKTKEVP (86 aa).

Belongs to the FKBP-type PPIase family. Tig subfamily.

Its subcellular location is the cytoplasm. The enzyme catalyses [protein]-peptidylproline (omega=180) = [protein]-peptidylproline (omega=0). Its function is as follows. Involved in protein export. Acts as a chaperone by maintaining the newly synthesized protein in an open conformation. Functions as a peptidyl-prolyl cis-trans isomerase. The polypeptide is Trigger factor (Streptococcus agalactiae serotype V (strain ATCC BAA-611 / 2603 V/R)).